Consider the following 302-residue polypeptide: Phosphatidylglycerol--prolipoprotein diacylglyceryl transferase (302 aa).

Helical transmembrane passes span 19 to 39 (FGPLALRWYALAYVAGILLGW), 67 to 87 (LVLWITLGIIVGGRLGYFVFY), 108 to 128 (IWEGGMSFHGGFLGVCAAIIL), 143 to 163 (LIAPVAPIGIFFGRIANFING), 203 to 223 (QLYEAALEGLVLFLILAFAIY), 232 to 252 (GALVATFLLGYGLARLALENV), and 264 to 284 (LGLTMGMMLSIPMILAGGWLL). Arg156 serves as a coordination point for a 1,2-diacyl-sn-glycero-3-phospho-(1'-sn-glycerol).

It belongs to the Lgt family.

It is found in the cell inner membrane. The catalysed reaction is L-cysteinyl-[prolipoprotein] + a 1,2-diacyl-sn-glycero-3-phospho-(1'-sn-glycerol) = an S-1,2-diacyl-sn-glyceryl-L-cysteinyl-[prolipoprotein] + sn-glycerol 1-phosphate + H(+). The protein operates within protein modification; lipoprotein biosynthesis (diacylglyceryl transfer). Catalyzes the transfer of the diacylglyceryl group from phosphatidylglycerol to the sulfhydryl group of the N-terminal cysteine of a prolipoprotein, the first step in the formation of mature lipoproteins. The sequence is that of Phosphatidylglycerol--prolipoprotein diacylglyceryl transferase from Caulobacter vibrioides (strain ATCC 19089 / CIP 103742 / CB 15) (Caulobacter crescentus).